Consider the following 376-residue polypeptide: MKNIGILGASGSVGTQGLDIIRQYPDTYKLVSFSVGKNLELANKIIEEFRPDICCVQDKEDIDKIQSSSIKVVYGNDGLMEIAAYVKNDMLLNSIMGSIGLKPTVHAIKHGIDIALANKETLVVAGEIIMQLAREYNVNIIPVDSEHSAIFQCLNGEDHKHIEKLIITASGGSFRELSREALKDVTVQDALKHPNWSMGKKITIDSATMMNKGLEVIEARWLFDMPIDKIETLLHKQSIIHSMVEFNDTSVIAQLGTPDMRMPILYAFSYPDRLARKAERLNLAEVGQLDFKAMDFDRYRCLKLAYDAISIGGTMPVVMNAVNEVVVQQFLDGEIGFLDIETIIEREMNAHDVIQSPDLETILEIDAQYKSRKYEV.

Positions 10, 11, 12, 13, 36, 37, 38, and 118 each coordinate NADPH. Position 119 (Lys-119) interacts with 1-deoxy-D-xylulose 5-phosphate. Position 120 (Glu-120) interacts with NADPH. Asp-144 serves as a coordination point for Mn(2+). 4 residues coordinate 1-deoxy-D-xylulose 5-phosphate: Ser-145, Glu-146, Ser-170, and His-193. Glu-146 contributes to the Mn(2+) binding site. NADPH is bound at residue Gly-199. Residues Ser-206, Asn-211, Lys-212, and Glu-215 each contribute to the 1-deoxy-D-xylulose 5-phosphate site. A Mn(2+)-binding site is contributed by Glu-215.

It belongs to the DXR family. It depends on Mg(2+) as a cofactor. Mn(2+) serves as cofactor.

The catalysed reaction is 2-C-methyl-D-erythritol 4-phosphate + NADP(+) = 1-deoxy-D-xylulose 5-phosphate + NADPH + H(+). The protein operates within isoprenoid biosynthesis; isopentenyl diphosphate biosynthesis via DXP pathway; isopentenyl diphosphate from 1-deoxy-D-xylulose 5-phosphate: step 1/6. Catalyzes the NADPH-dependent rearrangement and reduction of 1-deoxy-D-xylulose-5-phosphate (DXP) to 2-C-methyl-D-erythritol 4-phosphate (MEP). The chain is 1-deoxy-D-xylulose 5-phosphate reductoisomerase from Macrococcus caseolyticus (strain JCSC5402) (Macrococcoides caseolyticum).